The chain runs to 663 residues: Ras and EF-hand domain-containing protein (663 aa).

EF-hand domains are found at residues 1-33 (MNHA…CREL) and 35-70 (VPAD…VSEA). Ca(2+)-binding residues include D14, N16, S18, R20, D25, D48, D50, D52, Y54, and D59. Positions 122-297 (ELLLQQFEDL…LKKMVMEFQS (176 aa)) form a coiled coil. Over residues 324 to 336 (SQENASTKRQLSP) the composition is skewed to polar residues. The disordered stretch occupies residues 324–343 (SQENASTKRQLSPRNEVLPR). GTP contacts are provided by residues 477-482 (GSGKSS), 580-583 (NKVD), and 615-616 (AK).

The protein belongs to the small GTPase superfamily. Rab family. In terms of assembly, homodimer.

It localises to the cytoplasm. Its subcellular location is the perinuclear region. Functionally, binds predominantly GDP, and also GTP. The sequence is that of Ras and EF-hand domain-containing protein (rasef) from Danio rerio (Zebrafish).